Here is a 209-residue protein sequence, read N- to C-terminus: Large ribosomal subunit protein uL3 (209 aa).

Glutamine 150 is subject to N5-methylglutamine.

It belongs to the universal ribosomal protein uL3 family. Part of the 50S ribosomal subunit. Forms a cluster with proteins L14 and L19. Methylated by PrmB.

Its function is as follows. One of the primary rRNA binding proteins, it binds directly near the 3'-end of the 23S rRNA, where it nucleates assembly of the 50S subunit. This chain is Large ribosomal subunit protein uL3, found in Vibrio cholerae serotype O1 (strain ATCC 39541 / Classical Ogawa 395 / O395).